We begin with the raw amino-acid sequence, 458 residues long: ATP synthase subunit beta (458 aa).

148 to 155 (GGAGVGKT) is an ATP binding site.

This sequence belongs to the ATPase alpha/beta chains family. In terms of assembly, F-type ATPases have 2 components, CF(1) - the catalytic core - and CF(0) - the membrane proton channel. CF(1) has five subunits: alpha(3), beta(3), gamma(1), delta(1), epsilon(1). CF(0) has three main subunits: a(1), b(2) and c(9-12). The alpha and beta chains form an alternating ring which encloses part of the gamma chain. CF(1) is attached to CF(0) by a central stalk formed by the gamma and epsilon chains, while a peripheral stalk is formed by the delta and b chains.

The protein resides in the cell inner membrane. The catalysed reaction is ATP + H2O + 4 H(+)(in) = ADP + phosphate + 5 H(+)(out). Functionally, produces ATP from ADP in the presence of a proton gradient across the membrane. The catalytic sites are hosted primarily by the beta subunits. This chain is ATP synthase subunit beta, found in Mannheimia succiniciproducens (strain KCTC 0769BP / MBEL55E).